Consider the following 246-residue polypeptide: Small ribosomal subunit protein uS2 (246 aa).

The protein belongs to the universal ribosomal protein uS2 family.

The protein is Small ribosomal subunit protein uS2 of Saccharophagus degradans (strain 2-40 / ATCC 43961 / DSM 17024).